The primary structure comprises 379 residues: Presenilin-associated rhomboid-like protein, mitochondrial (379 aa).

Residues 1-52 (MAWRGWAQRGWGCGQAWGASVGGRSCEELTAVLTPPQLLGRRFNFFIQQKCG) constitute a mitochondrion transit peptide. Over 53–101 (FRKAPRKVEPRRSDPGTSGEAYKRSALIPPVEETVFYPSPYPIRSLIKP) the chain is Mitochondrial matrix. Ser-65 carries the phosphoserine modification. The residue at position 69 (Thr-69) is a Phosphothreonine. Ser-70 carries the phosphoserine modification. A helical transmembrane segment spans residues 102–121 (LFFTVGFTGCAFGSAAIWQY). Topologically, residues 122 to 167 (ESLKSRVQSYFDGIKADWLDSIRPQKEGDFRKEINKWWNNLSDGQR) are mitochondrial intermembrane. Residues 168-187 (TVTGIIAANVLVFCLWRVPS) traverse the membrane as a helical segment. Residues 188-207 (LQRTMIRYFTSNPASKVLCS) are Mitochondrial matrix-facing. Residues 208-230 (PMLLSTFSHFSLFHMAANMYVLW) form a helical membrane-spanning segment. The Mitochondrial intermembrane segment spans residues 231–244 (SFSSSIVNILGQEQ). The helical transmembrane segment at 245 to 262 (FMAVYLSAGVISNFVSYV) threads the bilayer. The Mitochondrial matrix segment spans residues 263-272 (GKVATGRYGP). The helical transmembrane segment at 273-289 (SLGASGAIMTVLAAVCT) threads the bilayer. Ser-277 functions as the Nucleophile in the catalytic mechanism. Topologically, residues 290–295 (KIPEGR) are mitochondrial intermembrane. A helical transmembrane segment spans residues 296 to 318 (LAIIFLPMFTFTAGNALKAIIAM). Over 319 to 332 (DTAGMILGWKFFDH) the chain is Mitochondrial matrix. Residues 333-354 (AAHLGGALFGIWYVTYGHELIW) form a helical membrane-spanning segment. Residue His-335 is part of the active site. Topologically, residues 355 to 379 (KNREPLVKIWHEIRTNGPKKGGGSK) are mitochondrial intermembrane.

It belongs to the peptidase S54 family. As to quaternary structure, interacts with PSEN1 and PSEN2. Binds OPA1. P-beta is proteolytically processed (beta-cleavage) in a PARL-dependent manner. The cleavage is inhibited when residues Ser-65, Thr-69 and Ser-70 are all phosphorylated.

It localises to the mitochondrion inner membrane. The protein resides in the nucleus. The catalysed reaction is Cleaves type-1 transmembrane domains using a catalytic dyad composed of serine and histidine that are contributed by different transmembrane domains.. Its function is as follows. Required for the control of apoptosis during postnatal growth. Essential for proteolytic processing of an antiapoptotic form of OPA1 which prevents the release of mitochondrial cytochrome c in response to intrinsic apoptotic signals. Required for the maturation of PINK1 into its 52kDa mature form after its cleavage by mitochondrial-processing peptidase (MPP). Promotes cleavage of serine/threonine-protein phosphatase PGAM5 in damaged mitochondria in response to loss of mitochondrial membrane potential. Mediates differential cleavage of PINK1 and PGAM5 depending on the health status of mitochondria, disassociating from PINK1 and associating with PGAM5 in response to mitochondrial membrane potential loss. Required for processing of CLPB into a form with higher protein disaggregase activity by removing an autoinhibitory N-terminal peptide. Promotes processing of DIABLO/SMAC in the mitochondrion which is required for DIABLO apoptotic activity. Also required for cleavage of STARD7 and TTC19. Promotes changes in mitochondria morphology regulated by phosphorylation of P-beta domain. This Homo sapiens (Human) protein is Presenilin-associated rhomboid-like protein, mitochondrial (PARL).